The sequence spans 664 residues: Putative peroxisomal acyl-coenzyme A oxidase 1.2 (664 aa).

FAD is bound at residue Cys-399–Tyr-404. The Microbody targeting signal signature appears at Ala-662–Leu-664.

This sequence belongs to the acyl-CoA oxidase family. The cofactor is FAD.

The protein localises to the peroxisome. The enzyme catalyses a 2,3-saturated acyl-CoA + O2 = a (2E)-enoyl-CoA + H2O2. Functionally, catalyzes the desaturation of acyl-CoAs to 2-trans-enoyl-CoAs. This Arabidopsis thaliana (Mouse-ear cress) protein is Putative peroxisomal acyl-coenzyme A oxidase 1.2 (ACX1.2).